Reading from the N-terminus, the 32-residue chain is Mu-theraphotoxin-Se1a (32 aa).

Intrachain disulfides connect C2–C17, C9–C22, and C16–C28.

It belongs to the neurotoxin 10 (Hwtx-1) family. As to expression, expressed by the venom gland.

The protein resides in the secreted. In terms of biological role, voltage-gated sodium channel Nav1.7/SCN9A inhibitor. The sequence is that of Mu-theraphotoxin-Se1a from Selenocosmia effera (Tarantula spider).